We begin with the raw amino-acid sequence, 284 residues long: Bifunctional protein FolD (284 aa).

Residues 166–168 (GAS) and Ile-232 contribute to the NADP(+) site.

The protein belongs to the tetrahydrofolate dehydrogenase/cyclohydrolase family. In terms of assembly, homodimer.

It carries out the reaction (6R)-5,10-methylene-5,6,7,8-tetrahydrofolate + NADP(+) = (6R)-5,10-methenyltetrahydrofolate + NADPH. The enzyme catalyses (6R)-5,10-methenyltetrahydrofolate + H2O = (6R)-10-formyltetrahydrofolate + H(+). Its pathway is one-carbon metabolism; tetrahydrofolate interconversion. Catalyzes the oxidation of 5,10-methylenetetrahydrofolate to 5,10-methenyltetrahydrofolate and then the hydrolysis of 5,10-methenyltetrahydrofolate to 10-formyltetrahydrofolate. The protein is Bifunctional protein FolD of Tolumonas auensis (strain DSM 9187 / NBRC 110442 / TA 4).